Reading from the N-terminus, the 462-residue chain is Tissue alpha-L-fucosidase (462 aa).

The first 28 residues, 1 to 28 (MWDLKSEWWAVGFGLLLLLAASAQAGGL), serve as a signal peptide directing secretion. Residues Asn237, Asn264, and Asn378 are each glycosylated (N-linked (GlcNAc...) asparagine).

It belongs to the glycosyl hydrolase 29 family. As to quaternary structure, homotetramer.

The protein resides in the lysosome. It catalyses the reaction an alpha-L-fucoside + H2O = L-fucose + an alcohol. The enzyme catalyses a neolactoside IV(2)-alpha-Fuc-nLc4Cer(d18:1(4E)) + H2O = a neolactoside nLc4Cer(d18:1(4E)) + L-fucose. It carries out the reaction a neolactoside IV(2)-alpha-Fuc-nLc4Cer(d18:0) + H2O = a neolactoside nLc4Cer(d18:0) + L-fucose. Alpha-L-fucosidase is responsible for hydrolyzing the alpha-1,6-linked fucose joined to the reducing-end N-acetylglucosamine of the carbohydrate moieties of glycoproteins. In Rattus norvegicus (Rat), this protein is Tissue alpha-L-fucosidase (Fuca1).